A 480-amino-acid chain; its full sequence is Probable glycosyltransferase 2 (480 aa).

Gly residues predominate over residues 1–21 (MGQEGMGYNNGKGGGGGGGGL). A disordered region spans residues 1–45 (MGQEGMGYNNGKGGGGGGGGLPMTAPRPRGASPLSSHGHHHRSRK). Over 1-49 (MGQEGMGYNNGKGGGGGGGGLPMTAPRPRGASPLSSHGHHHRSRKIHRT) the chain is Cytoplasmic. The chain crosses the membrane as a helical; Signal-anchor for type II membrane protein span at residues 50–72 (FNNVKITVLCGLVTILVLRGTIG). At 73–480 (LNLSLPNQPT…DVKAKISTTS (408 aa)) the chain is on the lumenal side. 4 N-linked (GlcNAc...) asparagine glycosylation sites follow: Asn-74, Asn-124, Asn-129, and Asn-458.

Belongs to the glycosyltransferase 34 family.

The protein localises to the golgi apparatus membrane. Its function is as follows. Probable glycosyltransferase that may be involved in the biosynthesis of xyloglucan. In Oryza sativa subsp. indica (Rice), this protein is Probable glycosyltransferase 2.